Here is a 281-residue protein sequence, read N- to C-terminus: 2-dehydro-3-deoxyphosphooctonate aldolase (281 aa).

It belongs to the KdsA family.

The protein resides in the cytoplasm. It catalyses the reaction D-arabinose 5-phosphate + phosphoenolpyruvate + H2O = 3-deoxy-alpha-D-manno-2-octulosonate-8-phosphate + phosphate. It functions in the pathway carbohydrate biosynthesis; 3-deoxy-D-manno-octulosonate biosynthesis; 3-deoxy-D-manno-octulosonate from D-ribulose 5-phosphate: step 2/3. It participates in bacterial outer membrane biogenesis; lipopolysaccharide biosynthesis. The polypeptide is 2-dehydro-3-deoxyphosphooctonate aldolase (Janthinobacterium sp. (strain Marseille) (Minibacterium massiliensis)).